The sequence spans 526 residues: DNA polymerase epsilon subunit B (526 aa).

This sequence belongs to the DNA polymerase epsilon subunit B family. As to quaternary structure, subunit of the DNA polymerase II. Interacts with POL2A (via C-terminus).

It localises to the nucleus. Functionally, as accessory component of DNA polymerase II participates in chromosomal DNA replication. Required for the timing and determination of cell fate during plant embryogenesis and root pole development, by promoting cell cycle and cell type patterning. Necessary for proper shoot (SAM) and root apical meristem (RAM) functions. Is essential to promote the first divisions of the zygote. In Arabidopsis thaliana (Mouse-ear cress), this protein is DNA polymerase epsilon subunit B.